Consider the following 200-residue polypeptide: Ribosome maturation factor RimM (200 aa).

In terms of domain architecture, PRC barrel spans 103–181; it reads KEGEYYFYQL…KIVAKRLEYL (79 aa).

Belongs to the RimM family. Binds ribosomal protein uS19.

Its subcellular location is the cytoplasm. Functionally, an accessory protein needed during the final step in the assembly of 30S ribosomal subunit, possibly for assembly of the head region. Essential for efficient processing of 16S rRNA. May be needed both before and after RbfA during the maturation of 16S rRNA. It has affinity for free ribosomal 30S subunits but not for 70S ribosomes. The polypeptide is Ribosome maturation factor RimM (Kosmotoga olearia (strain ATCC BAA-1733 / DSM 21960 / TBF 19.5.1)).